Here is a 549-residue protein sequence, read N- to C-terminus: Glucose-6-phosphate isomerase (549 aa).

The active-site Proton donor is E355. Active-site residues include H386 and K514.

Belongs to the GPI family.

It is found in the cytoplasm. The catalysed reaction is alpha-D-glucose 6-phosphate = beta-D-fructose 6-phosphate. It participates in carbohydrate biosynthesis; gluconeogenesis. It functions in the pathway carbohydrate degradation; glycolysis; D-glyceraldehyde 3-phosphate and glycerone phosphate from D-glucose: step 2/4. Functionally, catalyzes the reversible isomerization of glucose-6-phosphate to fructose-6-phosphate. In Salmonella agona (strain SL483), this protein is Glucose-6-phosphate isomerase.